The sequence spans 210 residues: CLAVATA3/ESR (CLE)-related protein 4A-3 (210 aa).

Positions 1 to 21 are cleaved as a signal peptide; it reads MAKNAMLCLLILRVVLALAFA. Positions 21–83 are required for secretion from the host cytoplasm to the host apoplasm; sequence ATNKKGDEEP…SNQLPNNNWM (63 aa). The N-linked (GlcNAc...) asparagine glycan is linked to Asn32. The interval 116–210 is disordered; sequence RKTGMHSQRH…APAGPDPIHH (95 aa). Composition is skewed to basic and acidic residues over residues 125–137 and 144–200; these read HHEETTLEQEKRV and PIHH…EKRG. An A-1 repeat occupies 127-135; the sequence is EETTLEQEK. A 4 X approximate repeat A region spans residues 127-198; the sequence is EETTLEQEKR…HEDTTLEQEK (72 aa). The stretch at 136–147 is one CLE-1 repeat; it reads RVAGAGPDPIHH. Positions 136–210 are 4 X approximate repeat CLE; it reads RVAGAGPDPI…APAGPDPIHH (75 aa). The A-2 repeat unit spans residues 148 to 156; sequence QDTTLEQEK. The stretch at 157–168 is one CLE-2 repeat; the sequence is RAVPAGPDPKHH. An A-3 repeat occupies 169–177; the sequence is EETTLEQEK. One copy of the CLE-3 repeat lies at 178–189; it reads RAVPAGPDPKHH. An A-4 repeat occupies 190-198; the sequence is EDTTLEQEK. Residues 199–210 form a CLE-4 repeat; sequence RGAPAGPDPIHH.

Belongs to the CLV3/ESR signal peptide family. As to expression, highly expressed exclusively within the dorsal esophageal gland cell during syncytium formation in host plants.

It localises to the secreted. It is found in the host cytoplasm. The protein localises to the host extracellular space. The protein resides in the extracellular space. Its subcellular location is the apoplast. Its function is as follows. Mimics host plant CLE extracellular signal peptides that regulate cell fate. May play a role in the differentiation or division of feeding cells (syncytia) induced in plant roots during infection. The chain is CLAVATA3/ESR (CLE)-related protein 4A-3 (CLE-4A-3) from Globodera rostochiensis (Golden nematode worm).